A 186-amino-acid polypeptide reads, in one-letter code: FMN reductase (NADPH) (186 aa).

The protein belongs to the SsuE family.

The catalysed reaction is FMNH2 + NADP(+) = FMN + NADPH + 2 H(+). This Pseudomonas aeruginosa (strain ATCC 15692 / DSM 22644 / CIP 104116 / JCM 14847 / LMG 12228 / 1C / PRS 101 / PAO1) protein is FMN reductase (NADPH) (msuE).